Consider the following 146-residue polypeptide: Hemoglobin subunit beta (146 aa).

V1 bears the N-acetylvaline mark. The Globin domain occupies 2-146; sequence HLTPEEKNAV…VANALAHKYH (145 aa). T12 is modified (phosphothreonine). A Phosphoserine modification is found at S44. The residue at position 59 (K59) is an N6-acetyllysine. H63 serves as a coordination point for heme b. N6-acetyllysine is present on K82. H92 contributes to the heme b binding site. An S-nitrosocysteine modification is found at C93. The residue at position 144 (K144) is an N6-acetyllysine.

This sequence belongs to the globin family. As to quaternary structure, heterotetramer of two alpha chains and two beta chains. Red blood cells.

In terms of biological role, involved in oxygen transport from the lung to the various peripheral tissues. The polypeptide is Hemoglobin subunit beta (HBB) (Theropithecus gelada (Gelada baboon)).